Consider the following 215-residue polypeptide: Glutaredoxin 2 (215 aa).

Residues 1–77 (MKLYIYDHCP…YVDKLDGKPL (77 aa)) enclose the GST N-terminal domain. An intrachain disulfide couples Cys9 to Cys12.

Belongs to the glutaredoxin family.

Involved in reducing some disulfides in a coupled system with glutathione reductase. Does not act as hydrogen donor for ribonucleotide reductase. This Escherichia coli O157:H7 protein is Glutaredoxin 2 (grxB).